The sequence spans 313 residues: Methionyl-tRNA formyltransferase (313 aa).

113 to 116 is a (6S)-5,6,7,8-tetrahydrofolate binding site; the sequence is SLLP.

Belongs to the Fmt family.

It carries out the reaction L-methionyl-tRNA(fMet) + (6R)-10-formyltetrahydrofolate = N-formyl-L-methionyl-tRNA(fMet) + (6S)-5,6,7,8-tetrahydrofolate + H(+). In terms of biological role, attaches a formyl group to the free amino group of methionyl-tRNA(fMet). The formyl group appears to play a dual role in the initiator identity of N-formylmethionyl-tRNA by promoting its recognition by IF2 and preventing the misappropriation of this tRNA by the elongation apparatus. The polypeptide is Methionyl-tRNA formyltransferase (Francisella tularensis subsp. novicida (strain U112)).